We begin with the raw amino-acid sequence, 612 residues long: MTTQAPPTSLLPLSPEQLARLQAAVGEFSPTQMAWLSGYFWGRVNQQPGAVASPAVAAPPPVTVTLISASQTGNARRLAEQLRDDLLAAQLSVNLVNAGDYKFKQIAQERLLVVVASTQGEGEPAEEAVALHKFLFSKKAPKLPETAFAVFGLGDTSYEHFCQAGKDFDSKLAELGAQRLLDRVDADVEYQVQAQQWRQQVVATLQAKVPAQSTAPTQFIAPTQSTTPAAAAITSGGTTTVSPYSKTAPLTAQLSVQQKVTGRNSEKDVRHIEIDLGDSGLRYQPGDALGVWFDNDPALVEELLALLWLKGDEPVSIDGQNMPLAQALLSHLELTQNTTLIVDKYAALSRDETLIALLADKPALQLYAKNTPFVDMVRQAPSDLNADQLVGLLRPLTPRLYSIASSQAETENEVHITVGVVRYDIDGRARSGGASGYLADRLEVDGDIRVFIEHNDNFRLPANPETPVIMIGPGTGIAPFRAFMQQREVDGASGKNWLFFGNPHFTEDFLYQVEWQRYVKEGVLTRIDLAWSRDQAHKIYVQDKLREQGAELWNWIQQGAHIYVCGDANRMAKDVEQVLLDVVALHGAMDAEQADEYLSELRQARRYQRDVY.

One can recognise a Flavodoxin-like domain in the interval 64-202; that stretch reads VTLISASQTG…QAQQWRQQVV (139 aa). FMN is bound by residues 70–75, 117–120, and 153–162; these read SQTGNA, STQG, and LGDTSYEHFC. Positions 247–461 constitute an FAD-binding FR-type domain; that stretch reads TAPLTAQLSV…IEHNDNFRLP (215 aa). FAD contacts are provided by residues Thr-335, Lys-369, 399 to 402, 417 to 419, Tyr-423, and 432 to 435; these read RLYS, TVG, and GGAS. Residues 532–533, 538–542, and Asp-574 contribute to the NADP(+) site; these read SR and KIYVQ. Position 612 (Tyr-612) interacts with FAD.

This sequence belongs to the NADPH-dependent sulphite reductase flavoprotein subunit CysJ family. The protein in the N-terminal section; belongs to the flavodoxin family. It in the C-terminal section; belongs to the flavoprotein pyridine nucleotide cytochrome reductase family. Alpha(8)-beta(8). The alpha component is a flavoprotein, the beta component is a hemoprotein. The cofactor is FAD. FMN serves as cofactor.

It catalyses the reaction hydrogen sulfide + 3 NADP(+) + 3 H2O = sulfite + 3 NADPH + 4 H(+). Its pathway is sulfur metabolism; hydrogen sulfide biosynthesis; hydrogen sulfide from sulfite (NADPH route): step 1/1. Component of the sulfite reductase complex that catalyzes the 6-electron reduction of sulfite to sulfide. This is one of several activities required for the biosynthesis of L-cysteine from sulfate. The flavoprotein component catalyzes the electron flow from NADPH -&gt; FAD -&gt; FMN to the hemoprotein component. This chain is Sulfite reductase [NADPH] flavoprotein alpha-component, found in Yersinia pseudotuberculosis serotype O:1b (strain IP 31758).